Consider the following 570-residue polypeptide: Proline--tRNA ligase (570 aa).

It belongs to the class-II aminoacyl-tRNA synthetase family. ProS type 1 subfamily. Homodimer.

Its subcellular location is the cytoplasm. It carries out the reaction tRNA(Pro) + L-proline + ATP = L-prolyl-tRNA(Pro) + AMP + diphosphate. In terms of biological role, catalyzes the attachment of proline to tRNA(Pro) in a two-step reaction: proline is first activated by ATP to form Pro-AMP and then transferred to the acceptor end of tRNA(Pro). As ProRS can inadvertently accommodate and process non-cognate amino acids such as alanine and cysteine, to avoid such errors it has two additional distinct editing activities against alanine. One activity is designated as 'pretransfer' editing and involves the tRNA(Pro)-independent hydrolysis of activated Ala-AMP. The other activity is designated 'posttransfer' editing and involves deacylation of mischarged Ala-tRNA(Pro). The misacylated Cys-tRNA(Pro) is not edited by ProRS. This Clostridium botulinum (strain Eklund 17B / Type B) protein is Proline--tRNA ligase.